Here is a 279-residue protein sequence, read N- to C-terminus: Shikimate dehydrogenase (NADP(+)) (279 aa).

Shikimate-binding positions include 21–23 and Thr68; that span reads SRS. The active-site Proton acceptor is the Lys72. An NADP(+)-binding site is contributed by Asp83. Shikimate contacts are provided by Asn92 and Asp107. NADP(+) is bound by residues 132–136, 156–161, and Leu221; these read GAGGA and NRTVER. Tyr223 provides a ligand contact to shikimate. Gly244 lines the NADP(+) pocket.

It belongs to the shikimate dehydrogenase family. As to quaternary structure, homodimer.

It catalyses the reaction shikimate + NADP(+) = 3-dehydroshikimate + NADPH + H(+). The protein operates within metabolic intermediate biosynthesis; chorismate biosynthesis; chorismate from D-erythrose 4-phosphate and phosphoenolpyruvate: step 4/7. Functionally, involved in the biosynthesis of the chorismate, which leads to the biosynthesis of aromatic amino acids. Catalyzes the reversible NADPH linked reduction of 3-dehydroshikimate (DHSA) to yield shikimate (SA). The sequence is that of Shikimate dehydrogenase (NADP(+)) from Nitrobacter winogradskyi (strain ATCC 25391 / DSM 10237 / CIP 104748 / NCIMB 11846 / Nb-255).